We begin with the raw amino-acid sequence, 242 residues long: Thaumatin-like protein 2 (242 aa).

The N-terminal stretch at 1 to 23 (MMKTLGAVLSLSLTLLSFGGAHA) is a signal peptide. 8 disulfide bridges follow: C32-C241, C77-C87, C92-C99, C147-C230, C152-C213, C160-C176, C180-C189, and C190-C200.

It belongs to the thaumatin family. In terms of tissue distribution, preferentially expressed in the abscission zone of fruit. Also expressed in leaf abscission zone.

Its subcellular location is the secreted. Functionally, may be involved in protecting plant tissues from pathogen infection. This chain is Thaumatin-like protein 2, found in Prunus persica (Peach).